A 318-amino-acid chain; its full sequence is Ribosomal RNA small subunit methyltransferase H (318 aa).

S-adenosyl-L-methionine contacts are provided by residues 38-40 (GGH), aspartate 58, tyrosine 86, aspartate 107, and glutamine 114.

The protein belongs to the methyltransferase superfamily. RsmH family.

The protein localises to the cytoplasm. The catalysed reaction is cytidine(1402) in 16S rRNA + S-adenosyl-L-methionine = N(4)-methylcytidine(1402) in 16S rRNA + S-adenosyl-L-homocysteine + H(+). In terms of biological role, specifically methylates the N4 position of cytidine in position 1402 (C1402) of 16S rRNA. The protein is Ribosomal RNA small subunit methyltransferase H of Methylibium petroleiphilum (strain ATCC BAA-1232 / LMG 22953 / PM1).